We begin with the raw amino-acid sequence, 323 residues long: o-succinylbenzoate synthase (323 aa).

Catalysis depends on Lys134, which acts as the Proton donor. Positions 162, 191, and 214 each coordinate Mg(2+). Catalysis depends on Lys236, which acts as the Proton acceptor.

Belongs to the mandelate racemase/muconate lactonizing enzyme family. MenC type 1 subfamily. A divalent metal cation serves as cofactor.

It catalyses the reaction (1R,6R)-6-hydroxy-2-succinyl-cyclohexa-2,4-diene-1-carboxylate = 2-succinylbenzoate + H2O. The protein operates within quinol/quinone metabolism; 1,4-dihydroxy-2-naphthoate biosynthesis; 1,4-dihydroxy-2-naphthoate from chorismate: step 4/7. It functions in the pathway quinol/quinone metabolism; menaquinone biosynthesis. Functionally, converts 2-succinyl-6-hydroxy-2,4-cyclohexadiene-1-carboxylate (SHCHC) to 2-succinylbenzoate (OSB). The chain is o-succinylbenzoate synthase from Yersinia pseudotuberculosis serotype I (strain IP32953).